The primary structure comprises 637 residues: tRNA uridine 5-carboxymethylaminomethyl modification enzyme MnmG (637 aa).

FAD is bound at residue 18–23 (GAGHAG). 281–295 (GPRYCPSIEDKIVRF) contacts NAD(+).

This sequence belongs to the MnmG family. In terms of assembly, homodimer. Heterotetramer of two MnmE and two MnmG subunits. Requires FAD as cofactor.

The protein localises to the cytoplasm. Its function is as follows. NAD-binding protein involved in the addition of a carboxymethylaminomethyl (cmnm) group at the wobble position (U34) of certain tRNAs, forming tRNA-cmnm(5)s(2)U34. This is tRNA uridine 5-carboxymethylaminomethyl modification enzyme MnmG from Ligilactobacillus salivarius (strain UCC118) (Lactobacillus salivarius).